Here is a 190-residue protein sequence, read N- to C-terminus: Small ribosomal subunit protein eS7x (190 aa).

M1 carries the post-translational modification N-acetylmethionine. Residues 17-50 are a coiled coil; that stretch reads TECEEQVAQALFDLENTNQELKSELKDLYINQAV.

This sequence belongs to the eukaryotic ribosomal protein eS7 family.

This Arabidopsis thaliana (Mouse-ear cress) protein is Small ribosomal subunit protein eS7x (RPS7C).